The chain runs to 230 residues: MVKLVFARHGESEWNKANLFTGWADVDLSEKGTQQAIDAGKLIKEAGIEFDKAYTSVLKRAIKTTNLALEASDQLWVPVEKSWRLNERHYGGLTGKNKAEAAEQFGDEQVHIWRRSYDVLPPKMDRDDEYSAHKDRRYASLDDSVIPDAENLKVTLERALPFWEDKIAPALKDGKNVFVGAHGNSIRALVKHIKKLSDDEIMDVEIPNFPPLVFEFDEKLNVVSEYYLGK.

Substrate-binding positions include 8-15, 21-22, Arg60, 87-90, Lys98, 114-115, and 183-184; these read RHGESEWN, TG, ERHY, RR, and GN. His9 serves as the catalytic Tele-phosphohistidine intermediate. Glu87 acts as the Proton donor/acceptor in catalysis.

It belongs to the phosphoglycerate mutase family. BPG-dependent PGAM subfamily.

The enzyme catalyses (2R)-2-phosphoglycerate = (2R)-3-phosphoglycerate. It participates in carbohydrate degradation; glycolysis; pyruvate from D-glyceraldehyde 3-phosphate: step 3/5. Catalyzes the interconversion of 2-phosphoglycerate and 3-phosphoglycerate. This is 2,3-bisphosphoglycerate-dependent phosphoglycerate mutase from Streptococcus thermophilus (strain CNRZ 1066).